We begin with the raw amino-acid sequence, 689 residues long: MSKHTVLFELGCEELPPKSLKTLRDALQAETVKGLNEAGLDFASVEAYAAPRRLALKIVDVDAAQADTQKRFDGPAVQAAYDAEGKPTKALEGFMRGQGITVDQLSTFQAGKVEKVCYLKDVKGQSLDALLPQILQTALDNLPIAKRMRSAASRTEFVRPVKWVVLLKDDQVIEATIQDHKAGNVTYGHRFHAPEAVTLAHANDYLAALEKAYVVANFEKRQATIQEQVKKLADEVNATAIVPADLLDEVTSLVEWPVALRATFEERYLAVPQEALITTMQDNQKYFCLINAEGKLQPYFITVSNIESKDPTQIIEGNEKVVRPRLSDAEFFFLQDQKQPLASRKEKLANMVFQAQLGTLWDKSTRIAKLAVALSSITGANPADAEKAALLAKCDLTSELVGEFPELQGIAGTYYARIEGENTEVSEALGEQYLPKFAGDVLPKTKTGTTIALADRLDTLVGIFGIGQAPTGSKDPFALRRSAIGILRLIIENELDVTIEELVNLALQGYGDIVKDHDKTRADAVAFLEGRYRAKYEDQGVAVDVLQAVQALAPKSPLDFDKRVNAVNHFRTLPEAAALAAANKRVANILAKEAAPEGSVIEANLVEDAEKALFAELQAVTPVVEPLLAAKDYTAALSKLAALRAPIDAFFDGVMVMADDADLKANRLRLLAQLRNLFTAVADVSVLQG.

This sequence belongs to the class-II aminoacyl-tRNA synthetase family. In terms of assembly, tetramer of two alpha and two beta subunits.

The protein localises to the cytoplasm. The enzyme catalyses tRNA(Gly) + glycine + ATP = glycyl-tRNA(Gly) + AMP + diphosphate. This is Glycine--tRNA ligase beta subunit from Acinetobacter baumannii (strain ACICU).